Reading from the N-terminus, the 627-residue chain is Muscarinic acetylcholine receptor gar-2 (627 aa).

Over 1–9 the chain is Extracellular; the sequence is MAVASVLLA. A helical membrane pass occupies residues 10–30; sequence LFMLFLSIVTVIGNLAVLLSY. Residues 31–41 are Cytoplasmic-facing; that stretch reads YLDKNIRQPTN. Residues 42–62 form a helical membrane-spanning segment; it reads YFIFSLAISDLLIGLEGIPVY. Residues 63-81 lie on the Extracellular side of the membrane; it reads TAFYLNNNEWIWGDVLCDL. An intrachain disulfide couples Cys79 to Cys160. Residues 82–102 form a helical membrane-spanning segment; sequence WLSIDYIVCLASIYTVLGITV. Residues 103 to 122 are Cytoplasmic-facing; that stretch reads DRYYSVKKPATYRNWRTPGR. A helical membrane pass occupies residues 123–143; that stretch reads VVLIIIFIWLVPSILFSVSIF. The Extracellular portion of the chain corresponds to 144-172; it reads GYGTFTGTGRILKETECYVQFMTNPYLNM. Residues 173–193 traverse the membrane as a helical segment; the sequence is GMYISYYWTTLFVMLYLYWGI. The Cytoplasmic segment spans residues 194–549; that stretch reads YRAAKKLALK…ENRARKALRT (356 aa). 3 disordered regions span residues 222–266, 423–442, and 449–475; these read VSVR…VGTP, REDE…ENGG, and ANDE…HDPN. The segment covering 231-264 has biased composition (low complexity); sequence NSSSDSPNDTSNSSKCFRTAPPTTTVQTTQTNVG. Over residues 459–475 the composition is skewed to basic and acidic residues; it reads KESEQKEEMTPENHDPN. A helical membrane pass occupies residues 550–570; sequence ITFILGSFIILWTPFYVLATI. The Extracellular portion of the chain corresponds to 571-586; sequence YGFCETCKASPSFNTL. Residues 587-609 form a helical membrane-spanning segment; sequence YTISYYLCYMNSPLNPFCYAMAN. The Cytoplasmic segment spans residues 610–627; the sequence is QQFKKTLTRIFKGDFRRV.

The protein belongs to the G-protein coupled receptor 1 family. Muscarinic acetylcholine receptor subfamily. In terms of tissue distribution, expressed in putative sensory neurons, many cells of the ventral cord and in the HSN motor neurons. Expressed in some cholinergic motor neurons and GABAergic motor neurons, which are the two major types of ventral cord motor neurons.

Its subcellular location is the cell membrane. The protein localises to the cell projection. It localises to the axon. Functionally, the muscarinic acetylcholine receptor mediates various cellular responses, including inhibition of adenylate cyclase, breakdown of phosphoinositides and modulation of potassium channels through the action of G proteins. Primary transducing effect is Pi turnover. Regulates the activity of ventral cord motor neurons. Couples to the G(o)-alpha G-protein subunit goa-1 to negatively regulate cholinergic receptor activity in the presence of high levels of the neurotransmitter acetylcholine in ventral cord motor neurons. As acetylcholine depolarizes body wall muscles, modulation of acetylcholine levels most likely results in the control locomotory behavior and egg-laying. The chain is Muscarinic acetylcholine receptor gar-2 from Caenorhabditis elegans.